The chain runs to 234 residues: Sugar fermentation stimulation protein homolog (234 aa).

The protein belongs to the SfsA family.

This is Sugar fermentation stimulation protein homolog from Bartonella quintana (strain Toulouse) (Rochalimaea quintana).